Consider the following 1938-residue polypeptide: Myosin-4 (1938 aa).

One can recognise a Myosin N-terminal SH3-like domain in the interval D33–P82. S36 bears the Phosphoserine mark. Residues T64 and T69 each carry the phosphothreonine modification. The Myosin motor domain maps to D86–D781. Residue G179 to T186 coordinates ATP. The residue at position 389 (Y389) is a Phosphotyrosine. Residue S392 is modified to Phosphoserine. Position 419 is a phosphothreonine (T419). A Phosphotyrosine modification is found at Y424. The tract at residues L658–E680 is actin-binding. H756 carries the post-translational modification Pros-methylhistidine. An actin-binding region spans residues K760 to G774. Positions L784–S813 constitute an IQ domain. Residues S845 to K1926 are a coiled coil. Residues S1091, S1095, S1161, and S1236 each carry the phosphoserine modification. At T1240 the chain carries Phosphothreonine. S1242 is subject to Phosphoserine. T1254 carries the phosphothreonine modification. S1260 bears the Phosphoserine mark. The residue at position 1264 (T1264) is a Phosphothreonine. Phosphoserine is present on S1277. T1285 bears the Phosphothreonine mark. Phosphoserine is present on residues S1287, S1291, S1302, and S1305. At Y1463 the chain carries Phosphotyrosine. T1466 bears the Phosphothreonine mark. The residue at position 1473 (S1473) is a Phosphoserine. Y1491 is subject to Phosphotyrosine. Residue S1494 is modified to Phosphoserine. T1500 bears the Phosphothreonine mark. Phosphoserine is present on S1513. T1516 carries the post-translational modification Phosphothreonine. A phosphoserine mark is found at S1541, S1553, S1573, S1599, S1602, S1713, and S1725. Phosphothreonine is present on residues T1729 and T1735. S1738 carries the post-translational modification Phosphoserine.

The protein belongs to the TRAFAC class myosin-kinesin ATPase superfamily. Myosin family. As to quaternary structure, muscle myosin is a hexameric protein that consists of 2 heavy chain subunits (MHC), 2 alkali light chain subunits (MLC) and 2 regulatory light chain subunits (MLC-2).

It is found in the cytoplasm. The protein localises to the myofibril. In terms of biological role, muscle contraction. The sequence is that of Myosin-4 (MYH4) from Oryctolagus cuniculus (Rabbit).